Reading from the N-terminus, the 291-residue chain is 33 kDa chaperonin (291 aa).

Cystine bridges form between Cys-235–Cys-237 and Cys-268–Cys-271.

It belongs to the HSP33 family. Post-translationally, under oxidizing conditions two disulfide bonds are formed involving the reactive cysteines. Under reducing conditions zinc is bound to the reactive cysteines and the protein is inactive.

The protein resides in the cytoplasm. Its function is as follows. Redox regulated molecular chaperone. Protects both thermally unfolding and oxidatively damaged proteins from irreversible aggregation. Plays an important role in the bacterial defense system toward oxidative stress. This Bacillus subtilis (strain 168) protein is 33 kDa chaperonin.